The following is a 60-amino-acid chain: Large ribosomal subunit protein uL30 (60 aa).

This sequence belongs to the universal ribosomal protein uL30 family. As to quaternary structure, part of the 50S ribosomal subunit.

The sequence is that of Large ribosomal subunit protein uL30 from Leifsonia xyli subsp. xyli (strain CTCB07).